Reading from the N-terminus, the 324-residue chain is Glyoxylate/hydroxypyruvate reductase B (324 aa).

Catalysis depends on residues arginine 237 and glutamate 266. The active-site Proton donor is the histidine 285.

Belongs to the D-isomer specific 2-hydroxyacid dehydrogenase family. GhrB subfamily. Homodimer.

The protein resides in the cytoplasm. The enzyme catalyses glycolate + NADP(+) = glyoxylate + NADPH + H(+). The catalysed reaction is (R)-glycerate + NAD(+) = 3-hydroxypyruvate + NADH + H(+). It catalyses the reaction (R)-glycerate + NADP(+) = 3-hydroxypyruvate + NADPH + H(+). Its function is as follows. Catalyzes the NADPH-dependent reduction of glyoxylate and hydroxypyruvate into glycolate and glycerate, respectively. The polypeptide is Glyoxylate/hydroxypyruvate reductase B (Salmonella schwarzengrund (strain CVM19633)).